The sequence spans 917 residues: Translation initiation factor IF-2 (917 aa).

Disordered stretches follow at residues 1 to 84 (MSDG…GRAG) and 150 to 318 (KESE…DRER). The segment covering 10-27 (DGNNTPSQGGEQTRSSRL) has biased composition (polar residues). Composition is skewed to low complexity over residues 69–84 (AAGP…GRAG), 154–177 (QQAA…AAEA), and 227–236 (SRPAAAAPAR). Pro residues predominate over residues 265-274 (GAPPAPPRRP). The span at 282-305 (GGSDRRSGRIDVRAAIEGDDDKTR) shows a compositional bias: basic and acidic residues. Positions 416–586 (PRAPVVTVMG…LLQSEMLDLK (171 aa)) constitute a tr-type G domain. The interval 425–432 (GHVDHGKT) is G1. 425 to 432 (GHVDHGKT) is a GTP binding site. Residues 450–454 (GITQH) form a G2 region. The interval 472–475 (DTPG) is G3. GTP-binding positions include 472–476 (DTPGH) and 526–529 (NKID). The segment at 526–529 (NKID) is G4. The segment at 562-564 (SAL) is G5.

Belongs to the TRAFAC class translation factor GTPase superfamily. Classic translation factor GTPase family. IF-2 subfamily.

The protein resides in the cytoplasm. Functionally, one of the essential components for the initiation of protein synthesis. Protects formylmethionyl-tRNA from spontaneous hydrolysis and promotes its binding to the 30S ribosomal subunits. Also involved in the hydrolysis of GTP during the formation of the 70S ribosomal complex. The polypeptide is Translation initiation factor IF-2 (Gluconobacter oxydans (strain 621H) (Gluconobacter suboxydans)).